Here is a 433-residue protein sequence, read N- to C-terminus: Serine/threonine-protein kinase Sgk1 (433 aa).

Positions 66–92 (QDVELMNSNPSPPPSPSQQINLGPSSN) are disordered. The span at 83 to 92 (QQINLGPSSN) shows a compositional bias: polar residues. In terms of domain architecture, Protein kinase spans 100-357 (FDFLKVIGKG…FTEIKNHMFF (258 aa)). Residues 106-114 (IGKGSFGKV) and K129 each bind ATP. The active-site Proton acceptor is D224. An AGC-kinase C-terminal domain is found at 358-433 (SPINWDDLNA…SYAPAMDSYL (76 aa)).

Belongs to the protein kinase superfamily. AGC Ser/Thr protein kinase family.

It is found in the cytoplasm. The protein localises to the nucleus. The protein resides in the endoplasmic reticulum. It catalyses the reaction L-seryl-[protein] + ATP = O-phospho-L-seryl-[protein] + ADP + H(+). It carries out the reaction L-threonyl-[protein] + ATP = O-phospho-L-threonyl-[protein] + ADP + H(+). In terms of biological role, protein kinase that may play an important role in cellular stress response. May be involved in the regulation of processes such as cell survival, neuronal excitability and renal sodium excretion. The chain is Serine/threonine-protein kinase Sgk1 (sgk1) from Danio rerio (Zebrafish).